Reading from the N-terminus, the 272-residue chain is 3-methyl-2-oxobutanoate hydroxymethyltransferase (272 aa).

Mg(2+) contacts are provided by aspartate 43 and aspartate 82. Residues 43–44 (DS), aspartate 82, and lysine 112 contribute to the 3-methyl-2-oxobutanoate site. A Mg(2+)-binding site is contributed by glutamate 114. The Proton acceptor role is filled by glutamate 179.

Belongs to the PanB family. As to quaternary structure, homodecamer; pentamer of dimers. Mg(2+) serves as cofactor.

It is found in the cytoplasm. It catalyses the reaction 3-methyl-2-oxobutanoate + (6R)-5,10-methylene-5,6,7,8-tetrahydrofolate + H2O = 2-dehydropantoate + (6S)-5,6,7,8-tetrahydrofolate. Its pathway is cofactor biosynthesis; (R)-pantothenate biosynthesis; (R)-pantoate from 3-methyl-2-oxobutanoate: step 1/2. Catalyzes the reversible reaction in which hydroxymethyl group from 5,10-methylenetetrahydrofolate is transferred onto alpha-ketoisovalerate to form ketopantoate. This chain is 3-methyl-2-oxobutanoate hydroxymethyltransferase, found in Staphylococcus aureus (strain bovine RF122 / ET3-1).